The chain runs to 413 residues: Phosphopentomutase (413 aa).

Positions 11, 306, 311, 347, 348, and 359 each coordinate Mn(2+).

Belongs to the phosphopentomutase family. It depends on Mn(2+) as a cofactor.

It is found in the cytoplasm. The catalysed reaction is 2-deoxy-alpha-D-ribose 1-phosphate = 2-deoxy-D-ribose 5-phosphate. The enzyme catalyses alpha-D-ribose 1-phosphate = D-ribose 5-phosphate. The protein operates within carbohydrate degradation; 2-deoxy-D-ribose 1-phosphate degradation; D-glyceraldehyde 3-phosphate and acetaldehyde from 2-deoxy-alpha-D-ribose 1-phosphate: step 1/2. Its function is as follows. Isomerase that catalyzes the conversion of deoxy-ribose 1-phosphate (dRib-1-P) and ribose 1-phosphate (Rib-1-P) to deoxy-ribose 5-phosphate (dRib-5-P) and ribose 5-phosphate (Rib-5-P), respectively. This chain is Phosphopentomutase, found in Helicobacter acinonychis (strain Sheeba).